Here is a 151-residue protein sequence, read N- to C-terminus: Cytochrome c-type biogenesis protein CcmE (151 aa).

Residues 1 to 9 (MKGLKKKRR) are Cytoplasmic-facing. The chain crosses the membrane as a helical; Signal-anchor for type II membrane protein span at residues 10–30 (IQIIALAFVALAGSTALIGYA). Residues 31 to 151 (MRDGINFFRS…FQHTEDQPQG (121 aa)) lie on the Periplasmic side of the membrane. The heme site is built by H123 and Y127.

This sequence belongs to the CcmE/CycJ family.

The protein resides in the cell inner membrane. Its function is as follows. Heme chaperone required for the biogenesis of c-type cytochromes. Transiently binds heme delivered by CcmC and transfers the heme to apo-cytochromes in a process facilitated by CcmF and CcmH. This is Cytochrome c-type biogenesis protein CcmE from Cereibacter sphaeroides (strain ATCC 17029 / ATH 2.4.9) (Rhodobacter sphaeroides).